A 300-amino-acid polypeptide reads, in one-letter code: Porphobilinogen deaminase (300 aa).

Residue Cys239 is modified to S-(dipyrrolylmethanemethyl)cysteine.

This sequence belongs to the HMBS family. Monomer. Dipyrromethane serves as cofactor.

It catalyses the reaction 4 porphobilinogen + H2O = hydroxymethylbilane + 4 NH4(+). It functions in the pathway porphyrin-containing compound metabolism; protoporphyrin-IX biosynthesis; coproporphyrinogen-III from 5-aminolevulinate: step 2/4. In terms of biological role, tetrapolymerization of the monopyrrole PBG into the hydroxymethylbilane pre-uroporphyrinogen in several discrete steps. This is Porphobilinogen deaminase from Francisella tularensis subsp. tularensis (strain WY96-3418).